Consider the following 209-residue polypeptide: Na(+)-translocating NADH-quinone reductase subunit D (209 aa).

5 consecutive transmembrane segments (helical) span residues 42-62, 70-90, 103-123, 131-151, and 178-198; these read LVMTLAVTLVTAFSSFFISLI, VRIIVQMVIIASLVIVVDQIL, VFVGLIITNCIVMGRAEAYAM, FMDGIGNGLGYGVVLVLVGFV, and NGLFLLAPSAFFIIGLLIWGL.

The protein belongs to the NqrDE/RnfAE family. In terms of assembly, composed of six subunits; NqrA, NqrB, NqrC, NqrD, NqrE and NqrF.

It is found in the cell inner membrane. It catalyses the reaction a ubiquinone + n Na(+)(in) + NADH + H(+) = a ubiquinol + n Na(+)(out) + NAD(+). In terms of biological role, NQR complex catalyzes the reduction of ubiquinone-1 to ubiquinol by two successive reactions, coupled with the transport of Na(+) ions from the cytoplasm to the periplasm. NqrA to NqrE are probably involved in the second step, the conversion of ubisemiquinone to ubiquinol. The sequence is that of Na(+)-translocating NADH-quinone reductase subunit D from Yersinia enterocolitica serotype O:8 / biotype 1B (strain NCTC 13174 / 8081).